We begin with the raw amino-acid sequence, 709 residues long: Phosphoprotein (709 aa).

Residues 1–35 are N0 binding; that stretch reads MDKLELVNDGLNIIDFIQKNQKEIQKTYGRSSIQQ. The tract at residues 53–92 is disordered; the sequence is SGESEQVEGGMSKDDGDVERRNLEDLSSTSPTDGTIGKRV. Over residues 63–76 the composition is skewed to basic and acidic residues; the sequence is MSKDDGDVERRNLE. An interaction with host STAT1 region spans residues 110–140; the sequence is VVTDVVYHDHGGECTGYGFTSSPERGWSDYT. S257 carries the post-translational modification Phosphoserine; by host. The interval 265 to 324 is disordered; the sequence is ISPEDEEPSSVGGKPNESIGRTIEGQSIRDNLQAKDNKSTDVPGAGPKDSAVKEEPPQKR. S350 bears the Phosphoserine; by host mark. Residues 384–473 form a disordered region; that stretch reads VQTADRQRPG…VNPVDDNDSL (90 aa). Polar residues-rich tracts occupy residues 416–426 and 444–456; these read GTENVPGSKSG and NAEN…STAV. The interval 475 to 580 is multimerization; it reads DKYIMPSDDF…LVSMMIMIPG (106 aa).

Homotetramer. Interacts (via multimerization domain) with polymerase L; this interaction forms the polymerase L-P complex. Interacts (via N-terminus) with N0 (via Ncore); this interaction allows P to chaperon N0 to avoid N polymerization before encapsidation. Interacts (via C-terminus) with N-RNA template (via C-terminus); this interaction positions the polymerase on the template for both transcription and replication. Interacts with host STAT1.

Its subcellular location is the virion. The protein localises to the host cytoplasm. In terms of biological role, essential cofactor of the RNA polymerase L that plays a central role in the transcription and replication by forming the polymerase complex with RNA polymerase L and recruiting L to the genomic N-RNA template for RNA synthesis. Also plays a central role in the encapsidation of nascent RNA chains by forming the encapsidation complex with the nucleocapsid protein N (N-P complex). Acts as a chaperone for newly synthesized free N protein, so-called N0, allowing encapsidation of nascent RNA chains during replication. The nucleoprotein protein N prevents excessive phosphorylation of P, which leads to down-regulation of viral transcription/ replication. Participates, together with N, in the formation of viral factories (viroplasms), which are large inclusions in the host cytoplasm where replication takes place. This chain is Phosphoprotein (P/V/C), found in Nipah virus.